A 92-amino-acid chain; its full sequence is PqqA binding protein (92 aa).

This sequence belongs to the PqqD family. As to quaternary structure, monomer. Interacts with PqqE.

The protein operates within cofactor biosynthesis; pyrroloquinoline quinone biosynthesis. Its function is as follows. Functions as a PqqA binding protein and presents PqqA to PqqE, in the pyrroloquinoline quinone (PQQ) biosynthetic pathway. In Azotobacter vinelandii (strain DJ / ATCC BAA-1303), this protein is PqqA binding protein.